Reading from the N-terminus, the 745-residue chain is Bacteriophage N4 adsorption protein B (745 aa).

3 consecutive transmembrane segments (helical) span residues 8 to 28 (FATW…IMFI), 362 to 382 (ISNF…LLLA), and 393 to 413 (FLSI…NFGL).

It is found in the cell inner membrane. Its function is as follows. Required for bacteriophage N4 adsorption. May be a component of the phage receptor. The protein is Bacteriophage N4 adsorption protein B (nfrB) of Escherichia coli O157:H7.